The chain runs to 259 residues: Caffeoyl-CoA O-methyltransferase 1 (259 aa).

Residues 1–14 (MATTTTEATKTSST) show a composition bias toward low complexity. Residues 1 to 29 (MATTTTEATKTSSTNGEDQKQSQNLRHQE) form a disordered region. Residue Ala-2 is modified to N-acetylalanine. Substrate is bound at residue Lys-33. S-adenosyl-L-methionine contacts are provided by residues Thr-75, Glu-97, 99–100 (GV), Ser-105, Asp-123, and Ala-152. Asp-175 lines the substrate pocket. Residue Asp-175 participates in a divalent metal cation binding. Asp-177 is a binding site for S-adenosyl-L-methionine. A divalent metal cation contacts are provided by Asp-201 and Asn-202. Asn-206 contributes to the substrate binding site.

It belongs to the class I-like SAM-binding methyltransferase superfamily. Cation-dependent O-methyltransferase family. CCoAMT subfamily. The cofactor is a divalent metal cation. As to expression, expressed in stems and roots. Detected in leaves, siliques, flower buds, flowers. Expressed in the tapetum, but not in the endothecium. Detected in the vascular system of leaves and all flower organs, including stigma, stamens, petals and sepals.

It carries out the reaction (E)-caffeoyl-CoA + S-adenosyl-L-methionine = (E)-feruloyl-CoA + S-adenosyl-L-homocysteine + H(+). Its pathway is aromatic compound metabolism; phenylpropanoid biosynthesis. Functionally, methylates caffeoyl-CoA to feruloyl-CoA. Has a very low activity with caffeic acid and esculetin. Involved in scopoletin biosynthesis in roots. The chain is Caffeoyl-CoA O-methyltransferase 1 (CCOAOMT1) from Arabidopsis thaliana (Mouse-ear cress).